We begin with the raw amino-acid sequence, 521 residues long: Cholesterol side-chain cleavage enzyme, mitochondrial (521 aa).

The transit peptide at M1–G39 directs the protein to the mitochondrion. Residue C462 coordinates heme.

This sequence belongs to the cytochrome P450 family. In terms of assembly, interacts with FDX1/adrenodoxin. Requires heme as cofactor.

Its subcellular location is the mitochondrion inner membrane. It catalyses the reaction 6 reduced [adrenodoxin] + cholesterol + 3 O2 + 6 H(+) = 4-methylpentanal + pregnenolone + 6 oxidized [adrenodoxin] + 4 H2O. The catalysed reaction is 2 reduced [adrenodoxin] + cholesterol + O2 + 2 H(+) = (22R)-hydroxycholesterol + 2 oxidized [adrenodoxin] + H2O. The enzyme catalyses (22R)-hydroxycholesterol + 2 reduced [adrenodoxin] + O2 + 2 H(+) = (20R,22R)-20,22-dihydroxycholesterol + 2 oxidized [adrenodoxin] + H2O. It carries out the reaction (20R,22R)-20,22-dihydroxycholesterol + 2 reduced [adrenodoxin] + O2 + 2 H(+) = 4-methylpentanal + pregnenolone + 2 oxidized [adrenodoxin] + 2 H2O. The protein operates within lipid metabolism; C21-steroid hormone metabolism. It functions in the pathway steroid metabolism; cholesterol metabolism. Its function is as follows. A cytochrome P450 monooxygenase that catalyzes the side-chain hydroxylation and cleavage of cholesterol to pregnenolone, the precursor of most steroid hormones. Catalyzes three sequential oxidation reactions of cholesterol, namely the hydroxylation at C22 followed with the hydroxylation at C20 to yield 20R,22R-hydroxycholesterol that is further cleaved between C20 and C22 to yield the C21-steroid pregnenolone and 4-methylpentanal. Mechanistically, uses molecular oxygen inserting one oxygen atom into a substrate and reducing the second into a water molecule. Two electrons are provided by NADPH via a two-protein mitochondrial transfer system comprising flavoprotein FDXR (adrenodoxin/ferredoxin reductase) and nonheme iron-sulfur protein FDX1 or FDX2 (adrenodoxin/ferredoxin). This chain is Cholesterol side-chain cleavage enzyme, mitochondrial (CYP11A1), found in Macaca fascicularis (Crab-eating macaque).